A 477-amino-acid chain; its full sequence is MSDDSTPKTPSRRIRHTGRRRTLHRFFCKRYTPRSLKRFLRRIHIPADRAYCMRYLADPVSTPVRVFGRTLLSRTYVRFDQQAIAHSADLKRLNAIAASIAKQRGRVNFWSLSMACASVLALLGLVYLIRNVIARRVVIGGSEAVFGARCEAAVVDLDLFNARFRLKNYAVANKHHPMWNLFEIESIDIHFDLLELSRGKFVSHTMVVEGVTWNTPRKTSGALPPRRAKRQRVRSSNPLIAKIQEKAAELAAPVSFGAGFSALKAQVDPRILLEREVKALKTPTLVQHVGAQAPKLAERWTQRVFDAHARAEKTVAAIRAVTELDFHALKDVSAIKQGIETLDRARRSTEEALATARTISHELQQDVHSTLGLAREFAAAVKADGARIARAAAAIRDIQADGGKKFISGLCTVFLARSFSHYYPYVAQMLDYVRGSQRTPSDGSPSAEAEKTAQSLTTRKRLQGVIFCLSATSLPCC.

The helical transmembrane segment at 107-129 (VNFWSLSMACASVLALLGLVYLI) threads the bilayer.

It localises to the membrane. This is an uncharacterized protein from Treponema pallidum (strain Nichols).